The chain runs to 328 residues: Methionyl-tRNA formyltransferase (328 aa).

Position 110 to 113 (110 to 113 (SLLP)) interacts with (6S)-5,6,7,8-tetrahydrofolate.

This sequence belongs to the Fmt family.

The enzyme catalyses L-methionyl-tRNA(fMet) + (6R)-10-formyltetrahydrofolate = N-formyl-L-methionyl-tRNA(fMet) + (6S)-5,6,7,8-tetrahydrofolate + H(+). Its function is as follows. Attaches a formyl group to the free amino group of methionyl-tRNA(fMet). The formyl group appears to play a dual role in the initiator identity of N-formylmethionyl-tRNA by promoting its recognition by IF2 and preventing the misappropriation of this tRNA by the elongation apparatus. This is Methionyl-tRNA formyltransferase from Prochlorococcus marinus (strain MIT 9515).